The chain runs to 395 residues: Protein PELOTA 2 (395 aa).

This sequence belongs to the eukaryotic release factor 1 family. Pelota subfamily. The cofactor is a divalent metal cation.

The protein resides in the cytoplasm. It localises to the nucleus. Component of the Pelota-HBS1L complex, a complex that recognizes stalled ribosomes and triggers the No-Go Decay (NGD) pathway. In the Pelota-HBS1L complex, pelo recognizes ribosomes stalled at the 3' end of an mRNA and engages stalled ribosomes by destabilizing mRNA in the mRNA channel. Following ribosome-binding, the Pelota-HBS1L complex promotes the disassembly of stalled ribosomes, followed by degradation of damaged mRNAs as part of the NGD pathway. The sequence is that of Protein PELOTA 2 (PEL2) from Arabidopsis thaliana (Mouse-ear cress).